A 148-amino-acid polypeptide reads, in one-letter code: uncharacterized protein (148 aa).

In terms of domain architecture, HTH asnC-type spans 3–64; that stretch reads LDALDRKILE…KLNYESIGYD (62 aa). Positions 22–41 form a DNA-binding region, H-T-H motif; it reads YREIAKDLNVAVGTIYNRIK.

This is an uncharacterized protein from Pyrococcus horikoshii (strain ATCC 700860 / DSM 12428 / JCM 9974 / NBRC 100139 / OT-3).